The primary structure comprises 80 residues: Conotoxin Vi6.2 (80 aa).

The N-terminal stretch at methionine 1–alanine 22 is a signal peptide. The propeptide occupies aspartate 23–arginine 47. Cystine bridges form between cysteine 49-cysteine 62, cysteine 56-cysteine 67, and cysteine 61-cysteine 77. 2 positions are modified to 4-hydroxyproline: proline 60 and proline 63.

It belongs to the conotoxin O1 superfamily. As to expression, expressed by the venom duct.

The protein localises to the secreted. Its function is as follows. Ion channel inhibitor that inhibits the increase in intracellular calcium upon depolarization in DRG neurons. In vivo, both intraperitoneal and intracranial injections into mice induce hyperactivity. In Conus virgo (Virgin cone), this protein is Conotoxin Vi6.2.